The primary structure comprises 832 residues: Golgin subfamily A member 6-like protein 24 (832 aa).

Disordered stretches follow at residues 1–107 (MWPQ…QEAL), 303–333 (QEQE…MRRQ), 351–431 (MHEQ…EMWR), 508–652 (QEEM…EQEE), and 664–832 (QEEM…MQEH). The segment covering 13 to 27 (LPTHPHLPTHPHLPT) has biased composition (basic residues). Basic and acidic residues predominate over residues 37 to 58 (MSKETRQSKLAEAKEQLTDHHP). Composition is skewed to polar residues over residues 59–69 (QTNPSVGTAAS) and 77–89 (NNGT…TSGG). Residues 92–107 (SPEDEQKASHQHQEAL) show a composition bias toward basic and acidic residues. Positions 163-828 (LEQALSAVAT…EVRLRQQEEK (666 aa)) form a coiled coil. 2 stretches are compositionally biased toward basic and acidic residues: residues 664–684 (QEEM…KMWE) and 692–832 (QEEK…MQEH).

It belongs to the GOLGA6 family.

This chain is Golgin subfamily A member 6-like protein 24, found in Homo sapiens (Human).